Here is a 565-residue protein sequence, read N- to C-terminus: Periplasmic trehalase (565 aa).

Positions 1-30 (MKSPAPSRPQKMALIPACIFLYFAALSVQA) are cleaved as a signal peptide. Substrate is bound by residues Arg152, 159–160 (WD), Asn196, 205–207 (RSQ), 277–279 (RPE), and Gly310. Active-site proton donor/acceptor residues include Asp312 and Glu496. Glu511 provides a ligand contact to substrate. Positions 540–565 (DNVPATHPTVKSATTQPSTKEAQPTP) are disordered. A compositionally biased stretch (polar residues) spans 548-565 (TVKSATTQPSTKEAQPTP).

The protein belongs to the glycosyl hydrolase 37 family. Monomer.

It is found in the periplasm. It catalyses the reaction alpha,alpha-trehalose + H2O = alpha-D-glucose + beta-D-glucose. In terms of biological role, provides the cells with the ability to utilize trehalose at high osmolarity by splitting it into glucose molecules that can subsequently be taken up by the phosphotransferase-mediated uptake system. The protein is Periplasmic trehalase of Shigella flexneri serotype 5b (strain 8401).